Reading from the N-terminus, the 382-residue chain is 3-isopropylmalate dehydrogenase (382 aa).

Position 91–102 (91–102 (GPKWGTGSVRPE)) interacts with NAD(+). Residues Arg-109, Arg-119, Arg-148, and Asp-240 each coordinate substrate. Residues Asp-240, Asp-265, and Asp-269 each coordinate Mg(2+). NAD(+) is bound at residue 304–315 (GSAPDLTENKVN).

Belongs to the isocitrate and isopropylmalate dehydrogenases family. In terms of assembly, homodimer. Requires Mg(2+) as cofactor. Mn(2+) is required as a cofactor.

It localises to the cytoplasm. The catalysed reaction is (2R,3S)-3-isopropylmalate + NAD(+) = 4-methyl-2-oxopentanoate + CO2 + NADH. Its pathway is amino-acid biosynthesis; L-leucine biosynthesis; L-leucine from 3-methyl-2-oxobutanoate: step 3/4. In terms of biological role, catalyzes the oxidation of 3-carboxy-2-hydroxy-4-methylpentanoate (3-isopropylmalate) to 3-carboxy-4-methyl-2-oxopentanoate. The product decarboxylates to 4-methyl-2 oxopentanoate. This chain is 3-isopropylmalate dehydrogenase (LEU2), found in Debaryomyces hansenii (strain ATCC 36239 / CBS 767 / BCRC 21394 / JCM 1990 / NBRC 0083 / IGC 2968) (Yeast).